We begin with the raw amino-acid sequence, 342 residues long: tRNA-specific 2-thiouridylase MnmA 2 (342 aa).

C62 (nucleophile) is an active-site residue. A disulfide bridge links C62 with C160. G86 contacts ATP. The interval 110-112 (KDQ) is interaction with tRNA. The active-site Cysteine persulfide intermediate is C160. The interaction with tRNA stretch occupies residues 268–269 (RY).

Belongs to the MnmA/TRMU family.

It localises to the cytoplasm. The enzyme catalyses S-sulfanyl-L-cysteinyl-[protein] + uridine(34) in tRNA + AH2 + ATP = 2-thiouridine(34) in tRNA + L-cysteinyl-[protein] + A + AMP + diphosphate + H(+). Functionally, catalyzes the 2-thiolation of uridine at the wobble position (U34) of tRNA, leading to the formation of s(2)U34. The chain is tRNA-specific 2-thiouridylase MnmA 2 from Syntrophus aciditrophicus (strain SB).